Reading from the N-terminus, the 817-residue chain is B lymphocyte-induced maturation protein 1 homolog (817 aa).

The segment at 1–62 is disordered; it reads MGQGSGDDGV…PAGVSASGAR (62 aa). Low complexity predominate over residues 15 to 61; it reads FSSAAAAAHSPPHSPLSVGVSSASSATSSSSTPPSSTSPAGVSASGA. The region spanning 103 to 241 is the SET domain; the sequence is MNLILKSSSK…ANTELSFWFS (139 aa). 4 C2H2-type zinc fingers span residues 508-530, 536-558, 564-586, and 592-614; these read YACK…VRTH, FKCE…HLVH, HRCD…LRLH, and YTCD…KRLH. The segment at 620 to 642 adopts a C2H2-type 5; degenerate zinc-finger fold; that stretch reads YSCGTCGKKYISPSGLRTHWKTT. The disordered stretch occupies residues 709-817; that stretch reads LLGQGPSGMQ…LPSLGLPHYP (109 aa). Positions 779–794 are enriched in low complexity; that stretch reads QGGPSSGSGQQQHPQH.

In terms of assembly, interacts with dre-1; the interaction targets blmp-1 for proteasomal degradation. Interacts with ldb-1 and ham-3. Post-translationally, ubiquitinated by the SCF(dre-1) complex, leading to its degradation by the proteasome. Expressed in hypodermal, vulval, intestinal and distal tip cells.

The protein resides in the nucleus. It localises to the cytoplasm. Its function is as follows. Transcription factor which binds to enhancer elements in the promoter region of genes. Regulates the expression of the transcription factor bed-3 to control vulval development. Promotes terminal differentiation in the hypodermis and is involved in regulation of gonadal outgrowth and entry into the dauer stage. Regulates the timing of dorsalward migration of the distal tip cells of the hermaphrodite gonad by inhibiting precocious unc-5 and lin-29 expression which in turn prevents early dorsalward turning. Plays a role in male tail tip morphogenesis. This Caenorhabditis elegans protein is B lymphocyte-induced maturation protein 1 homolog.